The following is a 71-amino-acid chain: DNA-directed RNA polymerase subunit Rpo10 (71 aa).

Zn(2+)-binding residues include Cys6, Cys9, Cys52, and Cys53.

The protein belongs to the archaeal Rpo10/eukaryotic RPB10 RNA polymerase subunit family. As to quaternary structure, part of the RNA polymerase complex. Zn(2+) is required as a cofactor.

The protein localises to the cytoplasm. It catalyses the reaction RNA(n) + a ribonucleoside 5'-triphosphate = RNA(n+1) + diphosphate. DNA-dependent RNA polymerase (RNAP) catalyzes the transcription of DNA into RNA using the four ribonucleoside triphosphates as substrates. The sequence is that of DNA-directed RNA polymerase subunit Rpo10 from Methanocella arvoryzae (strain DSM 22066 / NBRC 105507 / MRE50).